Consider the following 368-residue polypeptide: Transcription factor TGA1 (368 aa).

Over residues L53–T65 the composition is skewed to polar residues. Residues L53–D83 are disordered. The bZIP domain occupies P82–F145. Coiled-coil stretches lie at residues D83–G131 and N261–Q281. The tract at residues K84–K104 is basic motif. The tract at residues L110 to L124 is leucine-zipper. The DOG1 domain maps to I153–R363. A disulfide bridge links C260 with C266.

The protein belongs to the bZIP family. As to quaternary structure, binds DNA as a dimer. The reduced form interacts with NPR1. Predominantly expressed in roots.

It is found in the nucleus. Transcriptional activator that binds specifically to the DNA sequence 5'-TGACG-3'. Recognizes ocs elements like the as-1 motif of the cauliflower mosaic virus 35S promoter. Binding to the as-1-like cis elements mediate auxin- and salicylic acid-inducible transcription. May be involved in the induction of the systemic acquired resistance (SAR) via its interaction with NPR1. Could also bind to the Hex-motif (5'-TGACGTGG-3') another cis-acting element found in plant histone promoters. This Arabidopsis thaliana (Mouse-ear cress) protein is Transcription factor TGA1 (TGA1).